The chain runs to 296 residues: GTPase Era (296 aa).

The Era-type G domain maps to 7 to 173 (KAGFVSIIGR…VDLVREHLPE (167 aa)). The tract at residues 15–22 (GRPNVGKS) is G1. 15–22 (GRPNVGKS) lines the GTP pocket. The G2 stretch occupies residues 41–45 (QTTRN). Residues 62–65 (DTPG) are G3. GTP contacts are provided by residues 62 to 66 (DTPGI) and 122 to 125 (NKID). The interval 122–125 (NKID) is G4. A G5 region spans residues 152–154 (ISA). Residues 204–281 (TNREVPYGTA…YLELFVQVQE (78 aa)) enclose the KH type-2 domain.

Belongs to the TRAFAC class TrmE-Era-EngA-EngB-Septin-like GTPase superfamily. Era GTPase family. Monomer.

It is found in the cytoplasm. It localises to the cell inner membrane. Its function is as follows. An essential GTPase that binds both GDP and GTP, with rapid nucleotide exchange. Plays a role in 16S rRNA processing and 30S ribosomal subunit biogenesis and possibly also in cell cycle regulation and energy metabolism. The sequence is that of GTPase Era from Trichlorobacter lovleyi (strain ATCC BAA-1151 / DSM 17278 / SZ) (Geobacter lovleyi).